The primary structure comprises 287 residues: 4-hydroxybenzoate octaprenyltransferase (287 aa).

The next 6 helical transmembrane spans lie at Ala-30–Gly-50, Trp-89–Leu-109, Phe-133–Phe-153, Gly-158–Tyr-178, Ala-199–Tyr-221, and Asn-267–Phe-287.

The protein belongs to the UbiA prenyltransferase family. The cofactor is Mg(2+).

It localises to the cell inner membrane. It catalyses the reaction all-trans-octaprenyl diphosphate + 4-hydroxybenzoate = 4-hydroxy-3-(all-trans-octaprenyl)benzoate + diphosphate. Its pathway is cofactor biosynthesis; ubiquinone biosynthesis. Catalyzes the prenylation of para-hydroxybenzoate (PHB) with an all-trans polyprenyl group. Mediates the second step in the final reaction sequence of ubiquinone-8 (UQ-8) biosynthesis, which is the condensation of the polyisoprenoid side chain with PHB, generating the first membrane-bound Q intermediate 3-octaprenyl-4-hydroxybenzoate. The chain is 4-hydroxybenzoate octaprenyltransferase from Paraburkholderia phytofirmans (strain DSM 17436 / LMG 22146 / PsJN) (Burkholderia phytofirmans).